The primary structure comprises 171 residues: 16S rRNA aminocarboxypropyltransferase (171 aa).

Positions 17, 67, 90, and 109 each coordinate S-adenosyl-L-methionine.

It belongs to the TDD superfamily. TSR3 family.

The protein localises to the cytoplasm. It carries out the reaction an N(1)-methylpseudouridine in rRNA + S-adenosyl-L-methionine = N(1)-methyl-N(3)-[(3S)-3-amino-3-carboxypropyl]pseudouridine in rRNA + S-methyl-5'-thioadenosine + H(+). Its function is as follows. Aminocarboxypropyltransferase that catalyzes the aminocarboxypropyl transfer on pseudouridine corresponding to position 914 in M.jannaschii 16S rRNA. It constitutes the last step in biosynthesis of the hypermodified N1-methyl-N3-(3-amino-3-carboxypropyl) pseudouridine (m1acp3-Psi). The sequence is that of 16S rRNA aminocarboxypropyltransferase from Methanobrevibacter smithii (strain ATCC 35061 / DSM 861 / OCM 144 / PS).